The following is a 381-amino-acid chain: Creatine kinase M-type (381 aa).

The 88-residue stretch at 11-98 (KLNFKAEEEY…FDPIIQDRHG (88 aa)) folds into the Phosphagen kinase N-terminal domain. One can recognise a Phosphagen kinase C-terminal domain in the interval 125–367 (YVLSSRVRTG…KLMVEMEKKL (243 aa)). 128 to 132 (SSRVR) contacts ATP. A Phosphoserine modification is found at Ser-164. The residue at position 166 (Thr-166) is a Phosphothreonine. Ser-178 bears the Phosphoserine mark. Phosphothreonine is present on Thr-180. His-191 serves as a coordination point for ATP. Phosphoserine is present on Ser-199. ATP contacts are provided by Arg-236 and Arg-292. Residues Thr-313 and Thr-322 each carry the phosphothreonine modification. ATP is bound by residues 320–325 (RGTGGV) and Asp-335. Ser-372 is subject to Phosphoserine.

It belongs to the ATP:guanido phosphotransferase family. As to quaternary structure, dimer of identical or non-identical chains, which can be either B (brain type) or M (muscle type). With MM being the major form in skeletal muscle and myocardium, MB existing in myocardium, and BB existing in many tissues, especially brain.

It localises to the cytoplasm. It carries out the reaction creatine + ATP = N-phosphocreatine + ADP + H(+). Reversibly catalyzes the transfer of phosphate between ATP and various phosphogens (e.g. creatine phosphate). Creatine kinase isoenzymes play a central role in energy transduction in tissues with large, fluctuating energy demands, such as skeletal muscle, heart, brain and spermatozoa. This Bos taurus (Bovine) protein is Creatine kinase M-type (CKM).